The sequence spans 253 residues: MSFIAIIPSRYASTRLPGKPLADIAGKPMVVHVMAQAQASGAERVIVATDHPDVQHAVLQAGGEVCMTRADHNSGTERLAEVVELCGFADDDIIVNVQGDEPLIPPQIIRQVAENLARCDAGMATLAVPIHDAAEAFNPNAVKVVRDSQGYALYFSRAAIPWDRERFAVSQSQIGQTFLRHIGIYAYRAGFIRRYVNWAPSQLEQIEMLEQLRVLWYGEKIHVDVALQAPGTGVDTPEDLDCVRAILASQGQN.

It belongs to the KdsB family.

Its subcellular location is the cytoplasm. The enzyme catalyses 3-deoxy-alpha-D-manno-oct-2-ulosonate + CTP = CMP-3-deoxy-beta-D-manno-octulosonate + diphosphate. The protein operates within nucleotide-sugar biosynthesis; CMP-3-deoxy-D-manno-octulosonate biosynthesis; CMP-3-deoxy-D-manno-octulosonate from 3-deoxy-D-manno-octulosonate and CTP: step 1/1. Its pathway is bacterial outer membrane biogenesis; lipopolysaccharide biosynthesis. Activates KDO (a required 8-carbon sugar) for incorporation into bacterial lipopolysaccharide in Gram-negative bacteria. The protein is 3-deoxy-manno-octulosonate cytidylyltransferase of Edwardsiella ictaluri (strain 93-146).